The primary structure comprises 564 residues: Cytochrome P450 monooxygenase fsdH (564 aa).

A helical membrane pass occupies residues 18–38 (GSVSLAVLSTLAVVIAGWYIL). Cys472 serves as a coordination point for heme.

This sequence belongs to the cytochrome P450 family. Heme is required as a cofactor.

It localises to the membrane. It functions in the pathway mycotoxin biosynthesis. Functionally, cytochrome P450 monooxygenase; part of the gene cluster that mediates the biosynthesis of fusaridione A, a bright yellow trans-fused decalin-containing tetramic acid with antimicrobial activity. The PKS module of fsdS catalyzes the formation of the polyketide unit which is then conjugated to L-tyrosine by the condensation domain of the fsdS NRPS module. Activity of the Dieckmann cyclase domain (RED) results in release of the intermediate fusaridione A. The unstable pyrrolidinedione ring of fusaridione A is opened through a reverse-Dieckmann reaction to afford its ring-opened form. The chain is Cytochrome P450 monooxygenase fsdH from Fusarium heterosporum.